We begin with the raw amino-acid sequence, 219 residues long: Orotate phosphoribosyltransferase (219 aa).

Lys26 provides a ligand contact to 5-phospho-alpha-D-ribose 1-diphosphate. 34–35 (FF) is a binding site for orotate. Residues 72–73 (YK), Arg98, Lys99, Lys102, His104, and 124–132 (DDVITAGTA) each bind 5-phospho-alpha-D-ribose 1-diphosphate. Residues Thr128 and Arg156 each coordinate orotate.

Belongs to the purine/pyrimidine phosphoribosyltransferase family. PyrE subfamily. As to quaternary structure, homodimer. Mg(2+) is required as a cofactor.

It catalyses the reaction orotidine 5'-phosphate + diphosphate = orotate + 5-phospho-alpha-D-ribose 1-diphosphate. Its pathway is pyrimidine metabolism; UMP biosynthesis via de novo pathway; UMP from orotate: step 1/2. Catalyzes the transfer of a ribosyl phosphate group from 5-phosphoribose 1-diphosphate to orotate, leading to the formation of orotidine monophosphate (OMP). This Xanthomonas oryzae pv. oryzae (strain MAFF 311018) protein is Orotate phosphoribosyltransferase.